The following is a 249-amino-acid chain: Triosephosphate isomerase (249 aa).

Substrate-binding residues include N12 and K14. K14 bears the N6-acetyllysine mark. Y68 carries the 3'-nitrotyrosine modification. The residue at position 80 (S80) is a Phosphoserine. H96 (electrophile) is an active-site residue. Position 106 is a phosphoserine (S106). A Glycyl lysine isopeptide (Lys-Gly) (interchain with G-Cter in SUMO1) cross-link involves residue K142. K149 bears the N6-succinyllysine mark. At K156 the chain carries N6-acetyllysine; alternate. An N6-succinyllysine; alternate modification is found at K156. Residue E166 is the Proton acceptor of the active site. Position 173 is a phosphothreonine (T173). N6-acetyllysine; alternate is present on K194. K194 is modified (N6-succinyllysine; alternate). Residue K194 is modified to N6-methyllysine; alternate. S198 carries the phosphoserine modification. Y209 bears the 3'-nitrotyrosine mark. The residue at position 212 (S212) is a Phosphoserine. Phosphothreonine is present on T214. Position 223 is a phosphoserine (S223). N6-acetyllysine is present on K238.

The protein belongs to the triosephosphate isomerase family. As to quaternary structure, homodimer.

Its subcellular location is the cytoplasm. It catalyses the reaction dihydroxyacetone phosphate = methylglyoxal + phosphate. The catalysed reaction is D-glyceraldehyde 3-phosphate = dihydroxyacetone phosphate. It functions in the pathway carbohydrate degradation; glycolysis; D-glyceraldehyde 3-phosphate from glycerone phosphate: step 1/1. The protein operates within carbohydrate biosynthesis; gluconeogenesis. Its function is as follows. Triosephosphate isomerase is an extremely efficient metabolic enzyme that catalyzes the interconversion between dihydroxyacetone phosphate (DHAP) and D-glyceraldehyde-3-phosphate (G3P) in glycolysis and gluconeogenesis. In terms of biological role, it is also responsible for the non-negligible production of methylglyoxal a reactive cytotoxic side-product that modifies and can alter proteins, DNA and lipids. This Rattus norvegicus (Rat) protein is Triosephosphate isomerase (Tpi1).